Consider the following 101-residue polypeptide: Movement protein (101 aa).

The helical transmembrane segment at 30 to 50 (EVAILSFVALICFYLLYLWVL) threads the bilayer. A disordered region spans residues 75 to 101 (VDRSNPIPNIPAPPSQGNPGPFVPGTG).

It belongs to the mastrevirus movement protein family. Interacts with the capsid protein (CP). Part of a MP-CP-viral DNA complex.

The protein localises to the host membrane. Functionally, involved in the viral transport within, and between cells. The chain is Movement protein from Maize streak virus genotype A (isolate Kenya) (MSV).